A 468-amino-acid polypeptide reads, in one-letter code: 6-phospho-beta-galactosidase (468 aa).

D-galactose 6-phosphate contacts are provided by Gln19, His116, Asn159, Glu160, and Asn297. Residue Glu160 is the Proton donor of the active site. Glu375 acts as the Nucleophile in catalysis. Ser428, Trp429, Lys435, and Tyr437 together coordinate D-galactose 6-phosphate.

The protein belongs to the glycosyl hydrolase 1 family.

The catalysed reaction is a 6-phospho-beta-D-galactoside + H2O = D-galactose 6-phosphate + an alcohol. It functions in the pathway carbohydrate metabolism; lactose degradation; D-galactose 6-phosphate and beta-D-glucose from lactose 6-phosphate: step 1/1. The protein is 6-phospho-beta-galactosidase of Streptococcus mutans serotype c (strain ATCC 700610 / UA159).